The following is a 65-amino-acid chain: MKAKDIRALTTDQMLEKEKQYKEELFNLRFQQATGQLENTARLSKVRKNIARIKTILSEKALENN.

It belongs to the universal ribosomal protein uL29 family.

The polypeptide is Large ribosomal subunit protein uL29 (Lactobacillus helveticus (strain DPC 4571)).